Here is a 583-residue protein sequence, read N- to C-terminus: Exonuclease 3'-5' domain-containing protein 2 (583 aa).

Topologically, residues 1–11 (MTRESAVATKR) are mitochondrial intermembrane. Residues 12 to 29 (NWAILAAGVGLVYVLVRH) traverse the membrane as a helical segment. Topologically, residues 30-583 (RHRLLCPLRR…AGLDAKIKET (554 aa)) are cytoplasmic. The 3'-5' exonuclease domain occupies 62 to 228 (TTQWVLNELK…AIYQKLCRDL (167 aa)). Positions 83, 85, and 213 each coordinate a divalent metal cation. The span at 266–281 (GSGVTRSKGSTQSKSN) shows a compositional bias: polar residues. The segment at 266–286 (GSGVTRSKGSTQSKSNKWVPK) is disordered.

The protein belongs to the EXD2 family. Homodimer. Mg(2+) is required as a cofactor. Requires Mn(2+) as cofactor.

The protein resides in the mitochondrion membrane. 3'-5' exoribonuclease required for mitochondrial metabolism. This chain is Exonuclease 3'-5' domain-containing protein 2, found in Drosophila melanogaster (Fruit fly).